The sequence spans 171 residues: ATP synthase subunit b (171 aa).

A helical membrane pass occupies residues 26-46 (INLVLVIALLVYFLKGFLGGI).

It belongs to the ATPase B chain family. In terms of assembly, F-type ATPases have 2 components, F(1) - the catalytic core - and F(0) - the membrane proton channel. F(1) has five subunits: alpha(3), beta(3), gamma(1), delta(1), epsilon(1). F(0) has four main subunits: a(1), b(1), b'(1) and c(10-14). The alpha and beta chains form an alternating ring which encloses part of the gamma chain. F(1) is attached to F(0) by a central stalk formed by the gamma and epsilon chains, while a peripheral stalk is formed by the delta, b and b' chains.

Its subcellular location is the cellular thylakoid membrane. Its function is as follows. F(1)F(0) ATP synthase produces ATP from ADP in the presence of a proton or sodium gradient. F-type ATPases consist of two structural domains, F(1) containing the extramembraneous catalytic core and F(0) containing the membrane proton channel, linked together by a central stalk and a peripheral stalk. During catalysis, ATP synthesis in the catalytic domain of F(1) is coupled via a rotary mechanism of the central stalk subunits to proton translocation. Component of the F(0) channel, it forms part of the peripheral stalk, linking F(1) to F(0). This is ATP synthase subunit b from Synechococcus sp. (strain RCC307).